The sequence spans 357 residues: Holliday junction branch migration complex subunit RuvB (357 aa).

A compositionally biased stretch (low complexity) spans 1–15 (MAIQSDSLSSLPDSP). A disordered region spans residues 1-30 (MAIQSDSLSSLPDSPRIVAPQPVSPNEESI). Positions 13-195 (DSPRIVAPQP…FGIVSRLEFY (183 aa)) are large ATPase domain (RuvB-L). ATP contacts are provided by residues Leu-34, Arg-35, Gly-76, Lys-79, Thr-80, Thr-81, 142-144 (EDF), Arg-185, Tyr-195, and Arg-232. Thr-80 serves as a coordination point for Mg(2+). The interval 196–266 (NTDELARIVT…AAGRALAMLD (71 aa)) is small ATPAse domain (RuvB-S). The head domain (RuvB-H) stretch occupies residues 269–357 (PQGLDVMDRK…SGGTGELFSK (89 aa)). Positions 305, 324, and 329 each coordinate DNA.

Belongs to the RuvB family. Homohexamer. Forms an RuvA(8)-RuvB(12)-Holliday junction (HJ) complex. HJ DNA is sandwiched between 2 RuvA tetramers; dsDNA enters through RuvA and exits via RuvB. An RuvB hexamer assembles on each DNA strand where it exits the tetramer. Each RuvB hexamer is contacted by two RuvA subunits (via domain III) on 2 adjacent RuvB subunits; this complex drives branch migration. In the full resolvosome a probable DNA-RuvA(4)-RuvB(12)-RuvC(2) complex forms which resolves the HJ.

Its subcellular location is the cytoplasm. It catalyses the reaction ATP + H2O = ADP + phosphate + H(+). The RuvA-RuvB-RuvC complex processes Holliday junction (HJ) DNA during genetic recombination and DNA repair, while the RuvA-RuvB complex plays an important role in the rescue of blocked DNA replication forks via replication fork reversal (RFR). RuvA specifically binds to HJ cruciform DNA, conferring on it an open structure. The RuvB hexamer acts as an ATP-dependent pump, pulling dsDNA into and through the RuvAB complex. RuvB forms 2 homohexamers on either side of HJ DNA bound by 1 or 2 RuvA tetramers; 4 subunits per hexamer contact DNA at a time. Coordinated motions by a converter formed by DNA-disengaged RuvB subunits stimulates ATP hydrolysis and nucleotide exchange. Immobilization of the converter enables RuvB to convert the ATP-contained energy into a lever motion, pulling 2 nucleotides of DNA out of the RuvA tetramer per ATP hydrolyzed, thus driving DNA branch migration. The RuvB motors rotate together with the DNA substrate, which together with the progressing nucleotide cycle form the mechanistic basis for DNA recombination by continuous HJ branch migration. Branch migration allows RuvC to scan DNA until it finds its consensus sequence, where it cleaves and resolves cruciform DNA. The chain is Holliday junction branch migration complex subunit RuvB from Bordetella parapertussis (strain 12822 / ATCC BAA-587 / NCTC 13253).